Here is a 386-residue protein sequence, read N- to C-terminus: Acetylornithine aminotransferase (386 aa).

Pyridoxal 5'-phosphate contacts are provided by residues glycine 94 to threonine 95 and phenylalanine 121. A N(2)-acetyl-L-ornithine-binding site is contributed by arginine 124. Pyridoxal 5'-phosphate is bound at residue aspartate 206–glutamine 209. At lysine 235 the chain carries N6-(pyridoxal phosphate)lysine. Residue serine 263 participates in N(2)-acetyl-L-ornithine binding. Position 264 (threonine 264) interacts with pyridoxal 5'-phosphate.

Belongs to the class-III pyridoxal-phosphate-dependent aminotransferase family. ArgD subfamily. In terms of assembly, homodimer. It depends on pyridoxal 5'-phosphate as a cofactor.

Its subcellular location is the cytoplasm. It carries out the reaction N(2)-acetyl-L-ornithine + 2-oxoglutarate = N-acetyl-L-glutamate 5-semialdehyde + L-glutamate. It participates in amino-acid biosynthesis; L-arginine biosynthesis; N(2)-acetyl-L-ornithine from L-glutamate: step 4/4. The chain is Acetylornithine aminotransferase from Listeria monocytogenes serovar 1/2a (strain ATCC BAA-679 / EGD-e).